We begin with the raw amino-acid sequence, 168 residues long: Crossover junction endodeoxyribonuclease RuvC (168 aa).

Active-site residues include Asp8, Glu68, and Asp140. Mg(2+) is bound by residues Asp8, Glu68, and Asp140.

Belongs to the RuvC family. In terms of assembly, homodimer which binds Holliday junction (HJ) DNA. The HJ becomes 2-fold symmetrical on binding to RuvC with unstacked arms; it has a different conformation from HJ DNA in complex with RuvA. In the full resolvosome a probable DNA-RuvA(4)-RuvB(12)-RuvC(2) complex forms which resolves the HJ. The cofactor is Mg(2+).

The protein localises to the cytoplasm. It carries out the reaction Endonucleolytic cleavage at a junction such as a reciprocal single-stranded crossover between two homologous DNA duplexes (Holliday junction).. In terms of biological role, the RuvA-RuvB-RuvC complex processes Holliday junction (HJ) DNA during genetic recombination and DNA repair. Endonuclease that resolves HJ intermediates. Cleaves cruciform DNA by making single-stranded nicks across the HJ at symmetrical positions within the homologous arms, yielding a 5'-phosphate and a 3'-hydroxyl group; requires a central core of homology in the junction. The consensus cleavage sequence is 5'-(A/T)TT(C/G)-3'. Cleavage occurs on the 3'-side of the TT dinucleotide at the point of strand exchange. HJ branch migration catalyzed by RuvA-RuvB allows RuvC to scan DNA until it finds its consensus sequence, where it cleaves and resolves the cruciform DNA. This is Crossover junction endodeoxyribonuclease RuvC from Lawsonia intracellularis (strain PHE/MN1-00).